The following is a 241-amino-acid chain: Peroxisomal membrane protein 11C (241 aa).

The Cytoplasmic portion of the chain corresponds to 1–124 (MASLSGLASA…ARVLHVDSSR (124 aa)). Residues 125–149 (WWTLSTTLWALSLLLGVARSLWMLL) traverse the membrane as a helical segment. The Lumenal segment spans residues 150-211 (KLRQRLRSPT…GVLWAGRFPP (62 aa)). The chain crosses the membrane as a helical span at residues 212–227 (WLVGLMGTISSILSMY). Topologically, residues 228-241 (QAARAGGQAEATTP) are cytoplasmic.

The protein belongs to the peroxin-11 family. Homodimer. Heterodimer with either PEX11A or PEX11B. Interacts with FIS1.

The protein resides in the peroxisome membrane. Promotes membrane protrusion and elongation on the peroxisomal surface. This Homo sapiens (Human) protein is Peroxisomal membrane protein 11C (PEX11G).